The primary structure comprises 341 residues: Phosphoribosylformylglycinamidine cyclo-ligase (341 aa).

The protein belongs to the AIR synthase family.

The protein resides in the cytoplasm. The catalysed reaction is 2-formamido-N(1)-(5-O-phospho-beta-D-ribosyl)acetamidine + ATP = 5-amino-1-(5-phospho-beta-D-ribosyl)imidazole + ADP + phosphate + H(+). The protein operates within purine metabolism; IMP biosynthesis via de novo pathway; 5-amino-1-(5-phospho-D-ribosyl)imidazole from N(2)-formyl-N(1)-(5-phospho-D-ribosyl)glycinamide: step 2/2. This chain is Phosphoribosylformylglycinamidine cyclo-ligase, found in Xanthomonas oryzae pv. oryzae (strain MAFF 311018).